We begin with the raw amino-acid sequence, 196 residues long: MRPLDAKKDHYRKMAREQGYRSRAAYKLKELNKAYRIIGAGFTVLDLGCAPGSWMQVAASAAGNRGTVLGVDLEYAEELNHAESMRGDVEDESLAETVAERLGRADAVICDLSPQVSGNWSVDHARQISLNYAAARIMGRVLAPKGNAVFKVFDGEYAAEFREHMGHMFSKTKSTKPQASRKQSSELYLVCLGFRG.

Glycine 52, tryptophan 54, aspartate 72, aspartate 88, and aspartate 111 together coordinate S-adenosyl-L-methionine. Lysine 151 functions as the Proton acceptor in the catalytic mechanism.

The protein belongs to the class I-like SAM-binding methyltransferase superfamily. RNA methyltransferase RlmE family.

Its subcellular location is the cytoplasm. The enzyme catalyses uridine(2552) in 23S rRNA + S-adenosyl-L-methionine = 2'-O-methyluridine(2552) in 23S rRNA + S-adenosyl-L-homocysteine + H(+). Functionally, specifically methylates the uridine in position 2552 of 23S rRNA at the 2'-O position of the ribose in the fully assembled 50S ribosomal subunit. This is Ribosomal RNA large subunit methyltransferase E from Cenarchaeum symbiosum (strain A).